The primary structure comprises 121 residues: Non-structural protein 8 (121 aa).

The signal sequence occupies residues 1 to 15; sequence MKLLIVFGLLASVYC. An SARS ORF8 Ig-like domain is found at 19–121; it reads ECSIQECCEN…HDVRVVLDFI (103 aa). 3 disulfides stabilise this stretch: C25/C90, C37/C102, and C61/C83.

The polypeptide is Non-structural protein 8 (Bat coronavirus HKU3 (BtCoV)).